The primary structure comprises 140 residues: Nucleoside diphosphate kinase (140 aa).

Residues lysine 11, phenylalanine 59, arginine 87, threonine 93, arginine 104, and asparagine 114 each contribute to the ATP site. Histidine 117 acts as the Pros-phosphohistidine intermediate in catalysis.

It belongs to the NDK family. As to quaternary structure, homotetramer. It depends on Mg(2+) as a cofactor.

The protein localises to the cytoplasm. It catalyses the reaction a 2'-deoxyribonucleoside 5'-diphosphate + ATP = a 2'-deoxyribonucleoside 5'-triphosphate + ADP. The enzyme catalyses a ribonucleoside 5'-diphosphate + ATP = a ribonucleoside 5'-triphosphate + ADP. In terms of biological role, major role in the synthesis of nucleoside triphosphates other than ATP. The ATP gamma phosphate is transferred to the NDP beta phosphate via a ping-pong mechanism, using a phosphorylated active-site intermediate. This is Nucleoside diphosphate kinase from Rickettsia conorii (strain ATCC VR-613 / Malish 7).